Reading from the N-terminus, the 188-residue chain is V-type proton ATPase subunit E (188 aa).

The protein belongs to the V-ATPase E subunit family.

Its function is as follows. Produces ATP from ADP in the presence of a proton gradient across the membrane. This is V-type proton ATPase subunit E from Dictyoglomus thermophilum (strain ATCC 35947 / DSM 3960 / H-6-12).